A 442-amino-acid chain; its full sequence is D-serine dehydratase (442 aa).

K118 carries the N6-(pyridoxal phosphate)lysine modification.

The protein belongs to the serine/threonine dehydratase family. DsdA subfamily. Monomer. It depends on pyridoxal 5'-phosphate as a cofactor.

It carries out the reaction D-serine = pyruvate + NH4(+). The protein is D-serine dehydratase of Shigella dysenteriae serotype 1 (strain Sd197).